A 378-amino-acid polypeptide reads, in one-letter code: Phosphoglycerate kinase (378 aa).

Positions 1, 2, 3, 4, 16, 17, 40, 41, 43, 44, 99, 100, 147, and 148 each coordinate (2R)-3-phosphoglycerate. G191 contacts ADP. G191 contacts CDP. 2 residues coordinate AMP: A192 and K193. Position 192 (A192) interacts with ATP. Mg(2+) is bound at residue A192. D196 lines the CDP pocket. Residue D196 coordinates Mg(2+). K197 contributes to the AMP binding site. K197 lines the ATP pocket. Residue G215 participates in ADP binding. G215 provides a ligand contact to CDP. Residues G216 and G288 each coordinate AMP. ATP contacts are provided by G216 and G288. G313 and F318 together coordinate CDP. F318 serves as a coordination point for ADP. E319 provides a ligand contact to AMP. 3 residues coordinate ATP: E319, D351, and T352. D351 provides a ligand contact to Mg(2+).

It belongs to the phosphoglycerate kinase family. Monomer. Requires Mg(2+) as cofactor.

It catalyses the reaction (2R)-3-phosphoglycerate + ATP = (2R)-3-phospho-glyceroyl phosphate + ADP. It functions in the pathway carbohydrate degradation; glycolysis; pyruvate from D-glyceraldehyde 3-phosphate: step 2/5. This chain is Phosphoglycerate kinase (PGK), found in Condylostoma magnum.